The chain runs to 452 residues: Adenylosuccinate synthetase (452 aa).

GTP is bound by residues 40–46 (GDEGKGK) and 68–70 (GHT). Residue Asp41 is the Proton acceptor of the active site. Residues Asp41 and Gly68 each contribute to the Mg(2+) site. IMP is bound by residues 41–44 (DEGK), 66–69 (NAGH), Thr158, Arg172, Asn250, Thr265, and Arg329. His69 acts as the Proton donor in catalysis. 325–331 (VTTKRKR) is a binding site for substrate. Residues Arg331, 357-359 (KLD), and 440-442 (GVG) each bind GTP.

It belongs to the adenylosuccinate synthetase family. As to quaternary structure, homodimer. Mg(2+) is required as a cofactor.

It localises to the cytoplasm. The enzyme catalyses IMP + L-aspartate + GTP = N(6)-(1,2-dicarboxyethyl)-AMP + GDP + phosphate + 2 H(+). The protein operates within purine metabolism; AMP biosynthesis via de novo pathway; AMP from IMP: step 1/2. Plays an important role in the de novo pathway and in the salvage pathway of purine nucleotide biosynthesis. Catalyzes the first committed step in the biosynthesis of AMP from IMP. The sequence is that of Adenylosuccinate synthetase from Drosophila grimshawi (Hawaiian fruit fly).